The sequence spans 462 residues: Argininosuccinate lyase (462 aa).

It belongs to the lyase 1 family. Argininosuccinate lyase subfamily.

It localises to the cytoplasm. The enzyme catalyses 2-(N(omega)-L-arginino)succinate = fumarate + L-arginine. The protein operates within amino-acid biosynthesis; L-arginine biosynthesis; L-arginine from L-ornithine and carbamoyl phosphate: step 3/3. This Bacillus cereus (strain B4264) protein is Argininosuccinate lyase.